The primary structure comprises 334 residues: MAVDPAFLHALPKVELHLHIEGSLEPEMMVALAERNGLRLPYASVEAVRAAYDFQNLQDFLDLYYQGMAVLRTERDFEDLAMAYFQRAAAQNVLHAEIFFDPQGHTARGVALEAVIAGLTSARKRAEAELGVSSELILSFLRHLSEEEAFATLEEALPHRDQFIGVGLDSSEVGHPPAKFARVFARARAEGLRLVAHAGEEGPPDYVREALDLLAIDRLDHGNRALEDEALIERLIAEGMALTVCPLSNLKLRVVDDLGAHPLKAMLERGLKATINSDDPSYFGGYMLENMAAVAEALALETHHLRTLTANAIDASFASPARKAEMHARLAAVN.

Residues His17, His19, and His197 each coordinate Zn(2+). Glu200 (proton donor) is an active-site residue. Asp278 contacts Zn(2+). Asp279 contributes to the substrate binding site.

The protein belongs to the metallo-dependent hydrolases superfamily. Adenosine and AMP deaminases family. Adenine deaminase type 2 subfamily. Requires Zn(2+) as cofactor.

It catalyses the reaction adenine + H2O + H(+) = hypoxanthine + NH4(+). Catalyzes the hydrolytic deamination of adenine to hypoxanthine. Plays an important role in the purine salvage pathway and in nitrogen catabolism. The sequence is that of Adenine deaminase from Rhodospirillum rubrum (strain ATCC 11170 / ATH 1.1.1 / DSM 467 / LMG 4362 / NCIMB 8255 / S1).